A 447-amino-acid chain; its full sequence is Glutamate-1-semialdehyde 2,1-aminomutase (447 aa).

Lys-272 is subject to N6-(pyridoxal phosphate)lysine.

This sequence belongs to the class-III pyridoxal-phosphate-dependent aminotransferase family. HemL subfamily. In terms of assembly, homodimer. Pyridoxal 5'-phosphate is required as a cofactor.

It is found in the cytoplasm. It carries out the reaction (S)-4-amino-5-oxopentanoate = 5-aminolevulinate. Its pathway is porphyrin-containing compound metabolism; protoporphyrin-IX biosynthesis; 5-aminolevulinate from L-glutamyl-tRNA(Glu): step 2/2. This Leifsonia xyli subsp. xyli (strain CTCB07) protein is Glutamate-1-semialdehyde 2,1-aminomutase.